Consider the following 197-residue polypeptide: CASP-like protein 1B1 (197 aa).

N-acetylalanine is present on alanine 2. Topologically, residues 2–17 (AVSKLTLAATSGKSCK) are cytoplasmic. A helical transmembrane segment spans residues 18–38 (ILLGLRLLAFSATLSAAIVMG). Residues 39-69 (LNKETKTFIVGKVGNTPIQATFTAKFDHTPA) are Extracellular-facing. Residues 70-90 (FVFFVVANAMVSFHNLLMIAL) form a helical membrane-spanning segment. At 91-106 (QIFGGKMEFTGFRLLS) the chain is on the cytoplasmic side. Residues 107-127 (VAILDMLNVTLISAAANAAAF) traverse the membrane as a helical segment. At 128 to 156 (MAEVGKNGNKHARWDKICDRFATYCDHGA) the chain is on the extracellular side. The helical transmembrane segment at 157–177 (GALIAAFAGVILMLIISAASI) threads the bilayer. Topologically, residues 178-197 (SRLVQPNKCCSTTASPSVVP) are cytoplasmic.

The protein belongs to the Casparian strip membrane proteins (CASP) family. Homodimer and heterodimers.

It localises to the cell membrane. This is CASP-like protein 1B1 from Arabidopsis thaliana (Mouse-ear cress).